A 471-amino-acid chain; its full sequence is Putative multidrug resistance protein MdtD (471 aa).

At 1–11 (MTDLPDSTRWQ) the chain is on the periplasmic side. Residues 12–32 (LWIVAFGFFMQSLDTTIVNTA) traverse the membrane as a helical segment. Topologically, residues 33–48 (LPSMAQSLGESPLHMH) are cytoplasmic. Residues 49-69 (MVIVSYVLTVAVMLPASGWLA) traverse the membrane as a helical segment. The Periplasmic segment spans residues 70–76 (DKVGVRN). The chain crosses the membrane as a helical span at residues 77–97 (IFFTAIVLFTLGSLFCALSGT). Residues 98 to 101 (LNEL) lie on the Cytoplasmic side of the membrane. The helical transmembrane segment at 102–124 (LLARALQGVGGAMMVPVGRLTVM) threads the bilayer. Residues 125-137 (KIVPREQYMAAMT) lie on the Periplasmic side of the membrane. A helical transmembrane segment spans residues 138–158 (FVTLPGQIGPLLGPALGGLLV). Residues 159 to 164 (EYASWH) lie on the Cytoplasmic side of the membrane. A helical transmembrane segment spans residues 165 to 185 (WIFLINIPVGIIGAIATLMLM). The Periplasmic segment spans residues 186 to 196 (PNYTMQTRRFD). The helical transmembrane segment at 197 to 217 (LSGFLLLAVGMAVLTLALDGS) threads the bilayer. The Cytoplasmic segment spans residues 218 to 224 (KGTGFSP). Residues 225-245 (LAIAGLVAVGVVALVLYLLHA) form a helical membrane-spanning segment. Residues 246–262 (QNNNRALFSLKLFRTRT) lie on the Periplasmic side of the membrane. Residues 263-283 (FSLGLAGSFAGRIGSGMLPFM) traverse the membrane as a helical segment. The Cytoplasmic portion of the chain corresponds to 284–285 (TP). Residues 286–306 (VFLQIGLGFSPFHAGLMMIPM) form a helical membrane-spanning segment. Topologically, residues 307–341 (VLGSMGMKRIVVQVVNRFGYRWVLVATTLGLSLVT) are periplasmic. Residues 342–362 (LLFMTTALLGWYYVLPFVLFL) traverse the membrane as a helical segment. Residues 363–395 (QGMVNSTRFSSMNTLTLKDLPDNLASSGNSLLS) lie on the Cytoplasmic side of the membrane. The helical transmembrane segment at 396–416 (MIMQLSMSIGVTIAGLLLGLF) threads the bilayer. The Periplasmic portion of the chain corresponds to 417–430 (GSQHVSVDSGTTQT). Residues 431 to 451 (VFMYTWLSMAFIIALPAFVFA) form a helical membrane-spanning segment. At 452-471 (RVPSDTHQNVAISRRKRSAQ) the chain is on the cytoplasmic side.

The protein belongs to the major facilitator superfamily. TCR/Tet family.

It is found in the cell inner membrane. In Escherichia coli O81 (strain ED1a), this protein is Putative multidrug resistance protein MdtD.